The chain runs to 318 residues: Aspartate carbamoyltransferase catalytic subunit (318 aa).

Residues Arg55 and Thr56 each coordinate carbamoyl phosphate. L-aspartate is bound at residue Lys83. 3 residues coordinate carbamoyl phosphate: Arg105, His138, and Gln141. L-aspartate contacts are provided by Arg171 and Arg225. The carbamoyl phosphate site is built by Gly266 and Pro267.

It belongs to the aspartate/ornithine carbamoyltransferase superfamily. ATCase family. Heterododecamer (2C3:3R2) of six catalytic PyrB chains organized as two trimers (C3), and six regulatory PyrI chains organized as three dimers (R2).

It carries out the reaction carbamoyl phosphate + L-aspartate = N-carbamoyl-L-aspartate + phosphate + H(+). The protein operates within pyrimidine metabolism; UMP biosynthesis via de novo pathway; (S)-dihydroorotate from bicarbonate: step 2/3. Catalyzes the condensation of carbamoyl phosphate and aspartate to form carbamoyl aspartate and inorganic phosphate, the committed step in the de novo pyrimidine nucleotide biosynthesis pathway. The polypeptide is Aspartate carbamoyltransferase catalytic subunit (Corynebacterium kroppenstedtii (strain DSM 44385 / JCM 11950 / CIP 105744 / CCUG 35717)).